We begin with the raw amino-acid sequence, 312 residues long: Ribonuclease Z (312 aa).

Zn(2+) is bound by residues His-63, His-65, Asp-67, His-68, His-141, Asp-212, and His-270. Asp-67 serves as the catalytic Proton acceptor.

Belongs to the RNase Z family. Homodimer. It depends on Zn(2+) as a cofactor.

The enzyme catalyses Endonucleolytic cleavage of RNA, removing extra 3' nucleotides from tRNA precursor, generating 3' termini of tRNAs. A 3'-hydroxy group is left at the tRNA terminus and a 5'-phosphoryl group is left at the trailer molecule.. Its function is as follows. Zinc phosphodiesterase, which displays some tRNA 3'-processing endonuclease activity. Probably involved in tRNA maturation, by removing a 3'-trailer from precursor tRNA. The chain is Ribonuclease Z from Lactobacillus acidophilus (strain ATCC 700396 / NCK56 / N2 / NCFM).